The following is a 310-amino-acid chain: MVKVYAPASSANMSVGFDVLGAAVTPVDGALLGDVVTVEAAETFSLNNLGRFADKLPSEPRENIVYQCWERFCQELGKQIPVAMTLEKNMPIGSGLGSSACSVVAALMAMNEHCGKPLNDTRLLALMGELEGRISGSIHYDNVAPCFLGGMQLMIEENDIISQQVPGFDEWLWVLAYPGIKVSTAEARAILPAQYRRQDCIAHGRHLAGFIHACYSRQPELAAKLMKDVIAEPYRERLLPGFRQARQAVAEIGAVASGISGSGPTLFALCDKPDTAQRVADWLGKNYLQNQEGFVHICRLDTAGARVLEN.

91–101 lines the ATP pocket; that stretch reads PIGSGLGSSAC.

It belongs to the GHMP kinase family. Homoserine kinase subfamily.

It is found in the cytoplasm. It carries out the reaction L-homoserine + ATP = O-phospho-L-homoserine + ADP + H(+). It functions in the pathway amino-acid biosynthesis; L-threonine biosynthesis; L-threonine from L-aspartate: step 4/5. Catalyzes the ATP-dependent phosphorylation of L-homoserine to L-homoserine phosphate. In Escherichia coli O139:H28 (strain E24377A / ETEC), this protein is Homoserine kinase.